A 175-amino-acid chain; its full sequence is Interferon a3 (175 aa).

Residues 1-23 (MYTMQSWSCIFLIICSMQSVCHC) form the signal peptide. Residues Cys24 and Cys120 are joined by a disulfide bond.

It belongs to the alpha/beta interferon family. As to expression, isoform 1 and isoform 2 are expressed in several tissues, including gill, spleen, intestine, kidney and skin.

Its subcellular location is the secreted. The protein resides in the cytoplasm. It is found in the cytosol. In terms of biological role, key player in antiviral response. Induces expression of TLRs, including that of TLR3, TLR9 and TLR8a1, and that of cytosolic pattern recognition receptors, including RIGI, IFIH1/MDA5 and DHX58/LGP2. Also induces MX1 and its own expression. In the presence of intracellular IFNAR2 (iIFNAR2) and IFNAR1B, intracellular isoform 3 may mediate STAT1 and STAT2 phosphorylation and induction of EIF2AK2, MX1 and RSAD2. The sequence is that of Interferon a3 from Oncorhynchus mykiss (Rainbow trout).